We begin with the raw amino-acid sequence, 497 residues long: Phenylalanine--tRNA ligase alpha subunit (497 aa).

L-phenylalanine-binding positions include Thr329, 372–374, and Tyr412; that span reads QIE. Residue Glu414 coordinates Mg(2+). An L-phenylalanine-binding site is contributed by Phe438.

It belongs to the class-II aminoacyl-tRNA synthetase family. Phe-tRNA synthetase alpha subunit type 2 subfamily. As to quaternary structure, heterotetramer; dimer of two heterodimers formed by alpha and beta subunits. It depends on Mg(2+) as a cofactor.

It is found in the cytoplasm. It catalyses the reaction tRNA(Phe) + L-phenylalanine + ATP = L-phenylalanyl-tRNA(Phe) + AMP + diphosphate + H(+). The chain is Phenylalanine--tRNA ligase alpha subunit (farsa) from Danio rerio (Zebrafish).